The chain runs to 545 residues: DnaJ homolog subfamily C member 21 (545 aa).

Residues 3–69 enclose the J domain; it reads CHYEVLGVKR…QERAWYDNHR (67 aa). 4 disordered regions span residues 122–141, 276–302, 331–497, and 522–545; these read EKEH…SFGE, EYGQ…IANV, SFKS…KEVN, and HATA…RKNR. 2 stretches are compositionally biased toward acidic residues: residues 129 to 141 and 283 to 295; these read EEDE…SFGE and DASD…EELE. A coiled-coil region spans residues 180 to 286; sequence RWEKRAMEKE…YGQEFGDASD (107 aa). A C2H2-type 1 zinc finger spans residues 323-347; that stretch reads LYCPACDKSFKSDKAMKNHSKSKKH. The segment covering 339-348 has biased composition (basic residues); the sequence is KNHSKSKKHR. Over residues 372–388 the composition is skewed to acidic residues; the sequence is REEDDEEEDDDDDDEQN. Basic residues predominate over residues 394-406; it reads KLSKRQKKKKRLQ. The C2H2-type 2 zinc-finger motif lies at 498–522; sequence LRCVTCQYEFTTRNKLFDHLKSTGH. Basic residues predominate over residues 535–545; that stretch reads SKKKKDSRKNR.

May act as a co-chaperone for HSP70. The polypeptide is DnaJ homolog subfamily C member 21 (dnajc21) (Danio rerio (Zebrafish)).